The primary structure comprises 329 residues: Malate dehydrogenase (329 aa).

An NAD(+)-binding site is contributed by 12-18 (GAAGQIG). Substrate is bound by residues R95 and R101. Residues N108, Q115, and 132–134 (VGN) contribute to the NAD(+) site. Residues N134 and R165 each coordinate substrate. The active-site Proton acceptor is H190.

The protein belongs to the LDH/MDH superfamily. MDH type 2 family.

It carries out the reaction (S)-malate + NAD(+) = oxaloacetate + NADH + H(+). Functionally, catalyzes the reversible oxidation of malate to oxaloacetate. The sequence is that of Malate dehydrogenase from Bordetella bronchiseptica (strain ATCC BAA-588 / NCTC 13252 / RB50) (Alcaligenes bronchisepticus).